The chain runs to 523 residues: Uridylate cyclase (523 aa).

2 consecutive Guanylate cyclase domains span residues 69–209 (VHVY…AKLA) and 318–438 (MSIF…IGIR). A ribonucleoside 5'-triphosphate is bound by residues Tyr-72 and Arg-125. Mn(2+) contacts are provided by Asp-323, Ile-324, and Asp-372.

This sequence belongs to the adenylyl cyclase class-4/guanylyl cyclase family. Pyrimidine cyclase subfamily. Monomer. Requires Mn(2+) as cofactor.

The protein resides in the cytoplasm. It carries out the reaction UTP = 3',5'-cyclic UMP + diphosphate. In terms of biological role, pycsar (pyrimidine cyclase system for antiphage resistance) provides immunity against bacteriophage. The pyrimidine cyclase (PycC) synthesizes cyclic nucleotides in response to infection; these serve as specific second messenger signals. The signals activate the nearby effector, leading to bacterial cell death and abortive phage infection. A clade A Pycsar system. The pyrimidine cyclase gene of a two-gene Pycsar system, generates cyclic UMP (cUMP) from UTP, has little to no activity on ATP, CTP or GTP. Expression of this and effector RsPycTM (AC A0A4R2UGS4) probably confers resistance to some bacteriophage. The genes are probably only expressed in response to bacteriophage infection. In Rhizobium sp. (strain PP-F2F-G36), this protein is Uridylate cyclase.